A 149-amino-acid polypeptide reads, in one-letter code: Probable flagellum biosynthesis repressor protein FlbT (149 aa).

This sequence belongs to the FlbT family.

In terms of biological role, has a post-transcriptional repressor function in flagellum biogenesis. Associates with the 5'-UTR of fljK mRNA and promotes its degradation. The chain is Probable flagellum biosynthesis repressor protein FlbT from Rhizobium etli (strain ATCC 51251 / DSM 11541 / JCM 21823 / NBRC 15573 / CFN 42).